Reading from the N-terminus, the 268-residue chain is Basic endochitinase CHB4 (268 aa).

An N-terminal signal peptide occupies residues 1-24 (MALTKLSLVLFLCFLGLYSETVKS). One can recognise a Chitin-binding type-1 domain in the interval 25–59 (QNCGCAPNLCCSQFGYCGSTDAYCGTGCRSGPCRS). 7 cysteine pairs are disulfide-bonded: Cys27/Cys35, Cys29/Cys41, Cys34/Cys48, Cys52/Cys57, Cys92/Cys137, Cys150/Cys159, and Cys236/Cys268. The interval 71-268 (SVGSIVTQAF…GVDPGPNLSC (198 aa)) is catalytic. The active-site Proton donor is Glu132. Asn265 carries an N-linked (GlcNAc...) asparagine glycan.

This sequence belongs to the glycosyl hydrolase 19 family. Chitinase class I subfamily.

It is found in the secreted. The protein localises to the extracellular space. The catalysed reaction is Random endo-hydrolysis of N-acetyl-beta-D-glucosaminide (1-&gt;4)-beta-linkages in chitin and chitodextrins.. Functionally, defense against chitin-containing fungal pathogens. This chain is Basic endochitinase CHB4, found in Brassica napus (Rape).